The following is a 464-amino-acid chain: Glycine receptor subunit alpha-3 (464 aa).

The first 33 residues, 1–33, serve as a signal peptide directing secretion; it reads MAHVRHFRTLLSGFYFWEAALLLSLVATKETNS. The Extracellular portion of the chain corresponds to 34–255; the sequence is ARSRSAPMSP…RFHLERQMGY (222 aa). An N-linked (GlcNAc...) asparagine glycan is attached at Asn-71. A disulfide bond links Cys-171 and Cys-185. Positions 225 and 227 each coordinate Zn(2+). Cys-231 and Cys-242 form a disulfide bridge. 235–240 is a strychnine binding site; sequence YNTGKF. His-248 is a Zn(2+) binding site. The chain crosses the membrane as a helical span at residues 256-277; sequence YLIQMYIPSLLIVILSWVSFWI. The Cytoplasmic portion of the chain corresponds to 278–282; that stretch reads NMDAA. Residues 283–303 form a helical membrane-spanning segment; it reads PARVALGITTVLTMTTQSSGS. Topologically, residues 304–314 are extracellular; the sequence is RASLPKVSYVK. Residues 315-335 traverse the membrane as a helical segment; sequence AIDIWMAVCLLFVFSALLEYA. Over 336-430 the chain is Cytoplasmic; sequence AVNFVSRQHK…FIDRAKKIDT (95 aa). Ser-370 is subject to Phosphoserine. A Phosphoserine; by PKA modification is found at Ser-379. Residues 431–451 form a helical membrane-spanning segment; it reads ISRACFPLAFLIFNIFYWVIY. The Extracellular portion of the chain corresponds to 452–464; that stretch reads KILRHEDIHHQQD.

It belongs to the ligand-gated ion channel (TC 1.A.9) family. Glycine receptor (TC 1.A.9.3) subfamily. GLRA3 sub-subfamily. In terms of assembly, homopentamer (in vitro). Heteropentamer composed of GLRA3 and GLRB. Both homopentamers and heteropentamers form functional ion channels, but their characteristics are subtly different. In terms of processing, phosphorylated by PKA; this causes down-regulation of channel activity.

The protein resides in the postsynaptic cell membrane. It localises to the perikaryon. Its subcellular location is the cell projection. It is found in the dendrite. The protein localises to the synapse. The protein resides in the cell membrane. The catalysed reaction is chloride(in) = chloride(out). Low levels of Zn(2+) ions (1 uM) increase glycine sensitivity and decrease the glycine concentration required for half-maximal channel activity. Channel activity is strongly enhanced by ethanol. Inhibited by picrotoxin. Inhibited by prostaglandin E2, probably via PKA-mediated phosphorylation at Ser-379. Its function is as follows. Glycine receptors are ligand-gated chloride channels. Channel opening is triggered by extracellular glycine. Channel characteristics depend on the subunit composition; heteropentameric channels display faster channel closure. Plays an important role in the down-regulation of neuronal excitability. Contributes to the generation of inhibitory postsynaptic currents. Contributes to increased pain perception in response to increased prostaglandin E2 levels. Plays a role in cellular responses to ethanol. The sequence is that of Glycine receptor subunit alpha-3 (Glra3) from Rattus norvegicus (Rat).